We begin with the raw amino-acid sequence, 116 residues long: Large ribosomal subunit protein bL19 (116 aa).

Belongs to the bacterial ribosomal protein bL19 family.

This protein is located at the 30S-50S ribosomal subunit interface and may play a role in the structure and function of the aminoacyl-tRNA binding site. The sequence is that of Large ribosomal subunit protein bL19 from Stutzerimonas stutzeri (strain A1501) (Pseudomonas stutzeri).